Here is a 141-residue protein sequence, read N- to C-terminus: Nucleoside diphosphate kinase (141 aa).

Residues lysine 11, phenylalanine 59, arginine 87, threonine 93, arginine 104, and asparagine 114 each coordinate ATP. Histidine 117 acts as the Pros-phosphohistidine intermediate in catalysis.

This sequence belongs to the NDK family. Homotetramer. Mg(2+) serves as cofactor.

The protein resides in the cytoplasm. The enzyme catalyses a 2'-deoxyribonucleoside 5'-diphosphate + ATP = a 2'-deoxyribonucleoside 5'-triphosphate + ADP. It catalyses the reaction a ribonucleoside 5'-diphosphate + ATP = a ribonucleoside 5'-triphosphate + ADP. Functionally, major role in the synthesis of nucleoside triphosphates other than ATP. The ATP gamma phosphate is transferred to the NDP beta phosphate via a ping-pong mechanism, using a phosphorylated active-site intermediate. The chain is Nucleoside diphosphate kinase from Pseudomonas putida (strain ATCC 47054 / DSM 6125 / CFBP 8728 / NCIMB 11950 / KT2440).